Here is a 663-residue protein sequence, read N- to C-terminus: Spore germination protein GerIA (663 aa).

Residues 1–13 (MIWNWLRKKKKSN) show a composition bias toward basic residues. The disordered stretch occupies residues 1-175 (MIWNWLRKKK…SGGNSIYDFT (175 aa)). A compositionally biased stretch (basic and acidic residues) spans 47 to 56 (KNNEQKDSSQ). Composition is skewed to low complexity over residues 57–72 (DKQQSAKQGDSSQDKQ), 88–101 (PKQGDSSQDKQQSA), and 122–150 (DKQQSAKQGDSSQDKQQSAKQGDSSQDKQ). 5 consecutive transmembrane segments (helical) span residues 414–434 (IFVDGSPSVLLTPVSYFDFFI), 451–471 (ILRLIAVLFSICATPLYVAVL), 491–511 (AQVPFPPLIEALFLELAIDLL), 541–561 (AGLTSNILLIIVALSALASFI), and 578–598 (FLAFAEIGGLFGISLGFIFLF).

Belongs to the GerABKA family.

The protein resides in the cell membrane. Functionally, required for inosine germination. The chain is Spore germination protein GerIA (gerIA) from Bacillus cereus.